Reading from the N-terminus, the 328-residue chain is Tetraacyldisaccharide 4'-kinase (328 aa).

Position 59–66 (59–66 (TAGGNGKT)) interacts with ATP.

It belongs to the LpxK family.

It carries out the reaction a lipid A disaccharide + ATP = a lipid IVA + ADP + H(+). It participates in glycolipid biosynthesis; lipid IV(A) biosynthesis; lipid IV(A) from (3R)-3-hydroxytetradecanoyl-[acyl-carrier-protein] and UDP-N-acetyl-alpha-D-glucosamine: step 6/6. In terms of biological role, transfers the gamma-phosphate of ATP to the 4'-position of a tetraacyldisaccharide 1-phosphate intermediate (termed DS-1-P) to form tetraacyldisaccharide 1,4'-bis-phosphate (lipid IVA). This chain is Tetraacyldisaccharide 4'-kinase, found in Aliivibrio fischeri (strain ATCC 700601 / ES114) (Vibrio fischeri).